The primary structure comprises 369 residues: Glutamine synthetase (369 aa).

Positions 23-102 (VIAEYIWVDS…VLAECWNNDG (80 aa)) constitute a GS beta-grasp domain. The GS catalytic domain occupies 109–369 (HRHEAAKLFE…MSKEFERESS (261 aa)).

The protein belongs to the glutamine synthetase family. As to quaternary structure, homooctamer.

The protein localises to the cytoplasm. It catalyses the reaction L-glutamate + NH4(+) + ATP = L-glutamine + ADP + phosphate + H(+). The protein is Glutamine synthetase (GLN1) of Eremothecium gossypii (strain ATCC 10895 / CBS 109.51 / FGSC 9923 / NRRL Y-1056) (Yeast).